We begin with the raw amino-acid sequence, 159 residues long: MIAIYPGRFDPVTLGHLSVARRASGFCDRLIIAVFDNPAKPGLFTAAERVDLIKQSVKDLPNVEVHSFSGLMVNFARRMGVSLIIRGLRVGADFEREMEMYVMNRRLDEGIELCCLFSEPQYQYLSASLIKEVVMLGGDSSGLISEHVADALKNKLASA.

An ATP-binding site is contributed by histidine 16. Positions 40, 72, and 86 each coordinate substrate. ATP is bound by residues 87 to 89 (GLR), glutamate 97, and 122 to 128 (YQYLSAS).

It belongs to the bacterial CoaD family. As to quaternary structure, homohexamer. Mg(2+) serves as cofactor.

It localises to the cytoplasm. It catalyses the reaction (R)-4'-phosphopantetheine + ATP + H(+) = 3'-dephospho-CoA + diphosphate. Its pathway is cofactor biosynthesis; coenzyme A biosynthesis; CoA from (R)-pantothenate: step 4/5. Its function is as follows. Reversibly transfers an adenylyl group from ATP to 4'-phosphopantetheine, yielding dephospho-CoA (dPCoA) and pyrophosphate. The sequence is that of Phosphopantetheine adenylyltransferase from Dehalococcoides mccartyi (strain ATCC BAA-2266 / KCTC 15142 / 195) (Dehalococcoides ethenogenes (strain 195)).